The primary structure comprises 439 residues: Serine/threonine-protein kinase 2 (439 aa).

The region spanning 87 to 439 (NDDFYHISTG…IFSDWINGGN (353 aa)) is the Protein kinase domain. ATP is bound by residues 93-101 (ISTGGYGIV) and Lys117. Asp307 acts as the Proton acceptor in catalysis.

Belongs to the protein kinase superfamily. Ser/Thr protein kinase family. Poxviruses subfamily. In terms of processing, phosphorylated in vivo. Autophosphorylated in vitro.

The protein localises to the host endoplasmic reticulum. The protein resides in the host endoplasmic reticulum-Golgi intermediate compartment. It catalyses the reaction L-seryl-[protein] + ATP = O-phospho-L-seryl-[protein] + ADP + H(+). The enzyme catalyses L-threonyl-[protein] + ATP = O-phospho-L-threonyl-[protein] + ADP + H(+). In terms of biological role, essential serine-protein kinase involved in the early stage of virion morphogenesis. The chain is Serine/threonine-protein kinase 2 (OPG054) from Vaccinia virus (strain Copenhagen) (VACV).